We begin with the raw amino-acid sequence, 278 residues long: Large ribosomal subunit protein uL2 (278 aa).

The tract at residues 223-278 (GSVMNPNDHPHGGGEGKAPIGHPSPMSPWGKKTLGKKTRDHKAKSEKFIVRHRRAK) is disordered. Residues 255 to 264 (TLGKKTRDHK) are compositionally biased toward basic residues.

This sequence belongs to the universal ribosomal protein uL2 family. Part of the 50S ribosomal subunit. Forms a bridge to the 30S subunit in the 70S ribosome.

Its function is as follows. One of the primary rRNA binding proteins. Required for association of the 30S and 50S subunits to form the 70S ribosome, for tRNA binding and peptide bond formation. It has been suggested to have peptidyltransferase activity; this is somewhat controversial. Makes several contacts with the 16S rRNA in the 70S ribosome. This Lacticaseibacillus paracasei (strain ATCC 334 / BCRC 17002 / CCUG 31169 / CIP 107868 / KCTC 3260 / NRRL B-441) (Lactobacillus paracasei) protein is Large ribosomal subunit protein uL2.